A 160-amino-acid polypeptide reads, in one-letter code: UPF0178 protein BPP1051 (160 aa).

This sequence belongs to the UPF0178 family.

The sequence is that of UPF0178 protein BPP1051 from Bordetella parapertussis (strain 12822 / ATCC BAA-587 / NCTC 13253).